The primary structure comprises 890 residues: tRNase Z TRZ3, mitochondrial (890 aa).

A mitochondrion-targeting transit peptide spans 1-44 (MINSMPYLHKNLRLLRLLSSKSSPFPLSLRPFSPRSFSLSTLFS). A disordered region spans residues 46-67 (SSSSSSMENNEATNGSKSSSNS).

This sequence belongs to the RNase Z family. In terms of assembly, homodimer. It depends on Zn(2+) as a cofactor. Ca(2+) serves as cofactor. The cofactor is Mn(2+). Requires Mg(2+) as cofactor.

Its subcellular location is the mitochondrion. It is found in the nucleus. It carries out the reaction Endonucleolytic cleavage of RNA, removing extra 3' nucleotides from tRNA precursor, generating 3' termini of tRNAs. A 3'-hydroxy group is left at the tRNA terminus and a 5'-phosphoryl group is left at the trailer molecule.. In terms of biological role, zinc phosphodiesterase, which displays tRNA 3'-processing endonuclease activity. Involved in tRNA maturation, by removing a 3'-trailer from precursor tRNA. Can process the mitochondrial tRNA-like structures (t-elements). Involved in the processing of small nucleolar RNAs (snoRNAs). This chain is tRNase Z TRZ3, mitochondrial, found in Arabidopsis thaliana (Mouse-ear cress).